The primary structure comprises 492 residues: 5-taurinomethyluridine-[tRNA] synthase subunit GTPB3, mitochondrial (492 aa).

Residues 1–20 (MWRGLSALVTQAAWAPLRLC) constitute a mitochondrion transit peptide. The 5,10-methylenetetrahydrofolate site is built by R52, E112, and K152. The TrmE-type G domain maps to 249–416 (GANVVVTGPP…LLQALKTELA (168 aa)). GTP-binding positions include 256 to 263 (GPPNAGKS), 282 to 286 (GTTRD), 303 to 306 (DTAG), and 374 to 377 (NKSD). A K(+)-binding site is contributed by N259. S263 and T284 together coordinate Mg(2+). K492 lines the 5,10-methylenetetrahydrofolate pocket.

This sequence belongs to the TRAFAC class TrmE-Era-EngA-EngB-Septin-like GTPase superfamily. TrmE GTPase family. As to quaternary structure, homodimer; forms a dimer in the presence of potassium. Interacts with MTO1; forms the GTPBP3-MTO1 complex composed of homodimers of GTPBP3 and MTO1. K(+) serves as cofactor. In terms of tissue distribution, ubiquitously expressed. Highly expressed in tissues with high metabolic rates including heart, liver and brain. Weakly expressed in skeletal muscle.

The protein resides in the mitochondrion. It catalyses the reaction GTP + H2O = GDP + phosphate + H(+). In terms of biological role, GTPase component of the GTPBP3-MTO1 complex that catalyzes the 5-taurinomethyluridine (taum(5)U) modification at the 34th wobble position (U34) of mitochondrial tRNAs (mt-tRNAs), which plays a role in mt-tRNA decoding and mitochondrial translation. Taum(5)U formation on mammalian mt-tRNA requires the presence of both GTPBP3-mediated GTPase activity and MTO1 catalytic activity. This is 5-taurinomethyluridine-[tRNA] synthase subunit GTPB3, mitochondrial from Mus musculus (Mouse).